We begin with the raw amino-acid sequence, 676 residues long: UvrABC system protein B (676 aa).

Residues Arg39–Arg424 enclose the Helicase ATP-binding domain. Gly52–Thr59 is an ATP binding site. A Beta-hairpin motif is present at residues Tyr105–Ile128. The Helicase C-terminal domain occupies Gln441 to Ile604. Positions Lys611–Ser631 are disordered. Residues Glu629–Gln664 enclose the UVR domain.

It belongs to the UvrB family. Forms a heterotetramer with UvrA during the search for lesions. Interacts with UvrC in an incision complex.

It localises to the cytoplasm. In terms of biological role, the UvrABC repair system catalyzes the recognition and processing of DNA lesions. A damage recognition complex composed of 2 UvrA and 2 UvrB subunits scans DNA for abnormalities. Upon binding of the UvrA(2)B(2) complex to a putative damaged site, the DNA wraps around one UvrB monomer. DNA wrap is dependent on ATP binding by UvrB and probably causes local melting of the DNA helix, facilitating insertion of UvrB beta-hairpin between the DNA strands. Then UvrB probes one DNA strand for the presence of a lesion. If a lesion is found the UvrA subunits dissociate and the UvrB-DNA preincision complex is formed. This complex is subsequently bound by UvrC and the second UvrB is released. If no lesion is found, the DNA wraps around the other UvrB subunit that will check the other stand for damage. The sequence is that of UvrABC system protein B from Chlamydia muridarum (strain MoPn / Nigg).